Here is a 304-residue protein sequence, read N- to C-terminus: L-xylo-3-hexulose reductase (304 aa).

Residues Ile19, Asp68, and Asn107 each contribute to the NADP(+) site. Active-site proton donor residues include Ser163 and Ser164. The NADP(+) site is built by Tyr177, Lys181, and Ala209. Tyr177 serves as the catalytic Proton acceptor. The active-site Lowers pKa of active site Tyr is Lys181.

It belongs to the short-chain dehydrogenases/reductases (SDR) family.

It catalyses the reaction D-sorbitol + NADP(+) = L-xylo-3-hexulose + NADPH + H(+). The protein operates within carbohydrate degradation. In terms of biological role, L-xylulose reductase involved in the catabolism of D-galactose through an oxidoreductive pathway. Catalyzes the NADPH-dependent reduction of L-xylo-3-hexulose. Is also active with D-ribulose and L-xylulose, and to a lesser extent with D-xylulose, D-fructose and L- and D-sorbose. In the reverse reaction, shows activity with D-sorbitol and D-mannitol, low activity with xylitol, but no activity with galactitol, ribitol, and L- and D-arabitol. The protein is L-xylo-3-hexulose reductase of Hypocrea jecorina (strain QM6a) (Trichoderma reesei).